Reading from the N-terminus, the 415-residue chain is NADH-quinone oxidoreductase subunit D (415 aa).

Belongs to the complex I 49 kDa subunit family. As to quaternary structure, NDH-1 is composed of 14 different subunits. Subunits NuoB, C, D, E, F, and G constitute the peripheral sector of the complex.

The protein localises to the cell inner membrane. It catalyses the reaction a quinone + NADH + 5 H(+)(in) = a quinol + NAD(+) + 4 H(+)(out). Its function is as follows. NDH-1 shuttles electrons from NADH, via FMN and iron-sulfur (Fe-S) centers, to quinones in the respiratory chain. The immediate electron acceptor for the enzyme in this species is believed to be ubiquinone. Couples the redox reaction to proton translocation (for every two electrons transferred, four hydrogen ions are translocated across the cytoplasmic membrane), and thus conserves the redox energy in a proton gradient. This chain is NADH-quinone oxidoreductase subunit D, found in Myxococcus xanthus (strain DK1622).